We begin with the raw amino-acid sequence, 327 residues long: ATP-dependent 6-phosphofructokinase (327 aa).

ATP is bound by residues Gly11, 72 to 73 (RS), and 102 to 105 (GDGS). Asp103 contacts Mg(2+). Position 127-129 (127-129 (TID)) interacts with substrate. Asp129 serves as the catalytic Proton acceptor. Position 156 (Arg156) interacts with ADP. Residues Arg164 and 171–173 (MGR) each bind substrate. Residue 187–189 (GAE) coordinates ADP. Residues Glu224, Arg245, and 251-254 (HIQR) contribute to the substrate site.

Belongs to the phosphofructokinase type A (PFKA) family. ATP-dependent PFK group I subfamily. Prokaryotic clade 'B1' sub-subfamily. In terms of assembly, homotetramer. It depends on Mg(2+) as a cofactor.

The protein resides in the cytoplasm. It carries out the reaction beta-D-fructose 6-phosphate + ATP = beta-D-fructose 1,6-bisphosphate + ADP + H(+). It functions in the pathway carbohydrate degradation; glycolysis; D-glyceraldehyde 3-phosphate and glycerone phosphate from D-glucose: step 3/4. Allosterically activated by ADP and other diphosphonucleosides, and allosterically inhibited by phosphoenolpyruvate. In terms of biological role, catalyzes the phosphorylation of D-fructose 6-phosphate to fructose 1,6-bisphosphate by ATP, the first committing step of glycolysis. The protein is ATP-dependent 6-phosphofructokinase of Sulfurovum sp. (strain NBC37-1).